The sequence spans 71 residues: Omega-conotoxin-like Ac6.4 (71 aa).

The N-terminal stretch at 1-22 is a signal peptide; it reads MKLTCVVIVAVLLLTACQLLTA. Residues 23–45 constitute a propeptide that is removed on maturation; it reads DDSRGTQKHRALRSDTKLSMSTR. Intrachain disulfides connect Cys-46/Cys-61, Cys-53/Cys-65, and Cys-60/Cys-70. The residue at position 70 (Cys-70) is a Cysteine amide.

This sequence belongs to the conotoxin O1 superfamily. As to expression, expressed by the venom duct.

The protein resides in the secreted. Functionally, omega-conotoxins act at presynaptic membranes, they bind and block voltage-gated calcium channels (Cav). The polypeptide is Omega-conotoxin-like Ac6.4 (Conus achatinus (Little frog cone)).